The following is a 367-amino-acid chain: Eukaryotic translation initiation factor 3 subunit H (367 aa).

Positions 14 to 166 constitute an MPN domain; the sequence is VQVEALVVMK…LRAFRLSPTF (153 aa).

Belongs to the eIF-3 subunit H family. Component of the eukaryotic translation initiation factor 3 (eIF-3) complex.

It is found in the cytoplasm. Its function is as follows. Component of the eukaryotic translation initiation factor 3 (eIF-3) complex, which is involved in protein synthesis of a specialized repertoire of mRNAs and, together with other initiation factors, stimulates binding of mRNA and methionyl-tRNAi to the 40S ribosome. The eIF-3 complex specifically targets and initiates translation of a subset of mRNAs involved in cell proliferation. In Botryotinia fuckeliana (strain B05.10) (Noble rot fungus), this protein is Eukaryotic translation initiation factor 3 subunit H.